The chain runs to 321 residues: Type 3 secretion system translocon protein SctB (321 aa).

Residues 99 to 119 (AALIGGAISSVLGILGSFAAI) form a helical membrane-spanning segment.

Belongs to the SctB/EspB family. In terms of assembly, the core secretion machinery of the T3SS is composed of approximately 20 different proteins, including cytoplasmic components, a base, an export apparatus and a needle. This subunit is involved in the formation of a pore, called the translocon, in host membrane.

It localises to the secreted. It is found in the cell surface. The protein resides in the host membrane. Component of the type III secretion system (T3SS), also called injectisome, which is used to inject bacterial effector proteins into eukaryotic host cells. EspD and EspB are inserted into the host membrane where they form a pore and allow the translocation of effector proteins into the cytosol of target cells. Necessary for intimate attachment to epithelial cells. In Escherichia coli O127:H6 (strain E2348/69 / EPEC), this protein is Type 3 secretion system translocon protein SctB.